Here is a 434-residue protein sequence, read N- to C-terminus: MPKTDIARRVYNHTWKLDPIIRSLLDTDFYKLLMLQMIWQLYPDVDATFSLINRTKTVRLADEIDEQELRDQLDHARGLRFTKKEMIWLAGNSFYGRKQIFAPEFLVWLAKFRLPPYELSRRDGQFELTFRGRWAETTMWEIPALAIINELRSRAAMKGLGPFTLDVLYARAKARMWLKVEQLREHPNLRISDFGTRRRHSFLWQRWCVEALKEGIGPSFTGSSNVLLAMDNDLEAVGTNAHELPMVAAALARNDRELAAAPYKVLQDWNQLYGGNLLIVLPDAFGTAAFLRDAPDWVADWTGFRPDSAPPIEGGEKIIAWWKKMGRDPREKLLIFSDGLDVDTIVKTYCHFEGRVRMSFGWGTNLTNDFAGCAPTEINGLNPISVVCKVSEANGHPAVKLSDNPRKATGDPGEVERYLRFFGSEDFVEQSVRV.

The residue at position 242 (H242) is a Phosphohistidine; by autocatalysis.

This sequence belongs to the NAPRTase family. Post-translationally, transiently phosphorylated on a His residue during the reaction cycle. Phosphorylation strongly increases the affinity for substrates and increases the rate of nicotinate D-ribonucleotide production. Dephosphorylation regenerates the low-affinity form of the enzyme, leading to product release.

It carries out the reaction nicotinate + 5-phospho-alpha-D-ribose 1-diphosphate + ATP + H2O = nicotinate beta-D-ribonucleotide + ADP + phosphate + diphosphate. It functions in the pathway cofactor biosynthesis; NAD(+) biosynthesis; nicotinate D-ribonucleotide from nicotinate: step 1/1. Catalyzes the synthesis of beta-nicotinate D-ribonucleotide from nicotinate and 5-phospho-D-ribose 1-phosphate at the expense of ATP. In Sinorhizobium medicae (strain WSM419) (Ensifer medicae), this protein is Nicotinate phosphoribosyltransferase.